Reading from the N-terminus, the 202-residue chain is S-modulin (202 aa).

The N-myristoyl glycine moiety is linked to residue Gly2. 4 consecutive EF-hand domains span residues 25–60 (QEELCTWYQSFLKECPSGRISKKQFESIYSKFFPDA), 61–96 (DPKAYAQHVFRSFDANNDGTLDFKEYMIALMMTSSG), 97–132 (KANQKLEWAFCLYDVDGNGTINKKEVLEIITAIFKM), and 147–182 (TPEKRTNKIWVYFGKKDDDKLTEGEFIQGIVKNKEI). Ca(2+) contacts are provided by Asp74, Asn76, Asp78, Thr80, Glu85, Asp110, Asp112, Asn114, Thr116, and Glu121.

It belongs to the recoverin family. Post-translationally, the N-terminus is blocked.

In terms of biological role, calcium-dependent regulator of light sensitivity of cGMP phosphodiesterase in rod outer segments. Controls rhodopsin phosphorylation in a Ca(2+)-dependent manner. This chain is S-modulin, found in Aquarana catesbeiana (American bullfrog).